Consider the following 78-residue polypeptide: Beta-defensin 29 (78 aa).

An N-terminal signal peptide occupies residues 1 to 23 (MPVTKSYFMTVVVVLILVDETTG). Cystine bridges form between Cys40-Cys67, Cys47-Cys61, and Cys51-Cys68.

This sequence belongs to the beta-defensin family. In terms of tissue distribution, highly expressed in the cauda epididymis.

The protein resides in the secreted. Functionally, has antibacterial activity. This is Beta-defensin 29 (Defb29) from Mus musculus (Mouse).